The primary structure comprises 477 residues: P3 protein (477 aa).

Residues 1–21 (MVLMQDKGSSQQWPGLGGEGG) form a disordered region. 8 helical membrane passes run 225–245 (PMLL…FLMA), 253–273 (ALAL…SYLF), 281–301 (VTLA…FLPL), 320–340 (ISKI…GVLI), 361–381 (VLLL…LAGI), 383–403 (LPIV…GYCL), 417–437 (VSIE…QLSL), and 450–470 (FIVA…HFIY).

Belongs to the bile acid:sodium symporter (BASS) (TC 2.A.28) family.

The protein localises to the membrane. The ubiquitous expression and the conservation of the sequence in distant animal species suggest that the gene codes for a protein with housekeeping functions. The protein is P3 protein (SLC10A3) of Homo sapiens (Human).